We begin with the raw amino-acid sequence, 103 residues long: Small ribosomal subunit protein uS17 (103 aa).

The tract at residues 78 to 103 is disordered; it reads SHSPKADKSAGSTAPAPEAAAKEVSE.

This sequence belongs to the universal ribosomal protein uS17 family. In terms of assembly, part of the 30S ribosomal subunit.

In terms of biological role, one of the primary rRNA binding proteins, it binds specifically to the 5'-end of 16S ribosomal RNA. The sequence is that of Small ribosomal subunit protein uS17 from Parasynechococcus marenigrum (strain WH8102).